We begin with the raw amino-acid sequence, 236 residues long: UPF0257 lipoprotein YnfC (236 aa).

The first 16 residues, 1 to 16 (MKYKLLPCLLAIFLTG), serve as a signal peptide directing secretion. Residue cysteine 17 is the site of N-palmitoyl cysteine attachment. Cysteine 17 carries the S-diacylglycerol cysteine lipid modification.

Belongs to the UPF0257 family.

Its subcellular location is the cell membrane. In Escherichia coli O17:K52:H18 (strain UMN026 / ExPEC), this protein is UPF0257 lipoprotein YnfC.